The primary structure comprises 118 residues: Large ribosomal subunit protein uL24 (118 aa).

The protein belongs to the universal ribosomal protein uL24 family. As to quaternary structure, part of the 50S ribosomal subunit.

Its function is as follows. One of two assembly initiator proteins, it binds directly to the 5'-end of the 23S rRNA, where it nucleates assembly of the 50S subunit. Functionally, one of the proteins that surrounds the polypeptide exit tunnel on the outside of the subunit. The sequence is that of Large ribosomal subunit protein uL24 from Prochlorococcus marinus (strain NATL2A).